The sequence spans 324 residues: ATP-dependent 6-phosphofructokinase (324 aa).

Gly-11 serves as a coordination point for ATP. 21–25 (RAVVR) is an ADP binding site. ATP-binding positions include 72-73 (RE) and 102-105 (GNGS). Residue Asn-103 participates in Mg(2+) binding. 126-128 (TID) provides a ligand contact to substrate. Catalysis depends on Asp-128, which acts as the Proton acceptor. Arg-155 serves as a coordination point for ADP. Substrate contacts are provided by residues Arg-163 and 170-172 (MGR). ADP is bound by residues 186 to 188 (GAD), Arg-212, and 214 to 216 (KKF). Residues Glu-223, Arg-248, and 254–257 (YIQR) contribute to the substrate site.

The protein belongs to the phosphofructokinase type A (PFKA) family. ATP-dependent PFK group I subfamily. Prokaryotic clade 'B1' sub-subfamily. Homotetramer. Requires Mg(2+) as cofactor.

The protein resides in the cytoplasm. It carries out the reaction beta-D-fructose 6-phosphate + ATP = beta-D-fructose 1,6-bisphosphate + ADP + H(+). It functions in the pathway carbohydrate degradation; glycolysis; D-glyceraldehyde 3-phosphate and glycerone phosphate from D-glucose: step 3/4. Its activity is regulated as follows. Allosterically activated by ADP and other diphosphonucleosides, and allosterically inhibited by phosphoenolpyruvate. In terms of biological role, catalyzes the phosphorylation of D-fructose 6-phosphate to fructose 1,6-bisphosphate by ATP, the first committing step of glycolysis. This chain is ATP-dependent 6-phosphofructokinase, found in Persephonella marina (strain DSM 14350 / EX-H1).